Here is a 208-residue protein sequence, read N- to C-terminus: Photosystem I reaction center subunit II-1, chloroplastic (208 aa).

A chloroplast-targeting transit peptide spans 1–45 (MATQAAGIFNSAITTAATSGVKKLHFFSTTHRPKSLSFTKTAIRA). Residue T48 is modified to Phosphothreonine. Residues 49–72 (DSSAAAAAAPATKEAPVGFTPPQL) are disordered. Low complexity predominate over residues 50-64 (SSAAAAAAPATKEAP). Positions 141–149 (RLRSKYKIT) are ferredoxin and ferredoxin-oxidoreductase binding.

Belongs to the PsaD family. As to quaternary structure, interacts with PGRL1A and PGRL1B. Post-translationally, phosphorylated by a threonine specific thylakoid kinase in a light activated and redox-dependent manner.

The protein resides in the plastid. Its subcellular location is the chloroplast thylakoid membrane. PsaD can form complexes with ferredoxin and ferredoxin-oxidoreductase in photosystem I (PS I) reaction center. PSAD may encode the ferredoxin-docking protein. This Arabidopsis thaliana (Mouse-ear cress) protein is Photosystem I reaction center subunit II-1, chloroplastic (psaD1).